The sequence spans 58 residues: uncharacterized protein (58 aa).

This is an uncharacterized protein from Saccharomyces cerevisiae (strain ATCC 204508 / S288c) (Baker's yeast).